Consider the following 142-residue polypeptide: U1 small nuclear ribonucleoprotein C (142 aa).

Residues 4–36 (YYCDYCDTFLTHDSPSVRKTHNGGRKHKDNVRM) form a Matrin-type zinc finger.

Belongs to the U1 small nuclear ribonucleoprotein C family. As to quaternary structure, U1 snRNP is composed of the 7 core Sm proteins B/B', D1, D2, D3, E, F and G that assemble in a heptameric protein ring on the Sm site of the small nuclear RNA to form the core snRNP, and at least 3 U1 snRNP-specific proteins U1-70K, U1-A and U1-C. U1-C interacts with U1 snRNA and the 5' splice-site region of the pre-mRNA.

Its subcellular location is the nucleus. In terms of biological role, component of the spliceosomal U1 snRNP, which is essential for recognition of the pre-mRNA 5' splice-site and the subsequent assembly of the spliceosome. U1-C is directly involved in initial 5' splice-site recognition for both constitutive and regulated alternative splicing. The interaction with the 5' splice-site seems to precede base-pairing between the pre-mRNA and the U1 snRNA. Stimulates commitment or early (E) complex formation by stabilizing the base pairing of the 5' end of the U1 snRNA and the 5' splice-site region. The sequence is that of U1 small nuclear ribonucleoprotein C from Caenorhabditis elegans.